The following is a 239-amino-acid chain: Ribose-5-phosphate isomerase A (239 aa).

Substrate contacts are provided by residues 31 to 34 (FGST), 88 to 91 (DGAD), and 101 to 104 (KGGG). Catalysis depends on Glu-110, which acts as the Proton acceptor. Lys-128 serves as a coordination point for substrate.

This sequence belongs to the ribose 5-phosphate isomerase family. In terms of assembly, homodimer.

The catalysed reaction is aldehydo-D-ribose 5-phosphate = D-ribulose 5-phosphate. It functions in the pathway carbohydrate degradation; pentose phosphate pathway; D-ribose 5-phosphate from D-ribulose 5-phosphate (non-oxidative stage): step 1/1. Functionally, catalyzes the reversible conversion of ribose-5-phosphate to ribulose 5-phosphate. This is Ribose-5-phosphate isomerase A from Chloroflexus aurantiacus (strain ATCC 29366 / DSM 635 / J-10-fl).